The primary structure comprises 230 residues: Large ribosomal subunit protein uL3 (230 aa).

2 disordered regions span residues 125–149 (QAIGPRSHGGGGGSKPIRQTGSLGD) and 210–230 (PNPKNPVSLFVPNSDKEVKNE).

This sequence belongs to the universal ribosomal protein uL3 family. In terms of assembly, part of the 50S ribosomal subunit. Forms a cluster with proteins L14 and L19.

Functionally, one of the primary rRNA binding proteins, it binds directly near the 3'-end of the 23S rRNA, where it nucleates assembly of the 50S subunit. The chain is Large ribosomal subunit protein uL3 from Mesomycoplasma hyopneumoniae (strain 232) (Mycoplasma hyopneumoniae).